Reading from the N-terminus, the 375-residue chain is Alcohol dehydrogenase 1 (375 aa).

N-acetylserine is present on S2. Residues C47, H68, C98, C101, C104, C112, and C175 each contribute to the Zn(2+) site. NAD(+) is bound by residues 200–205, D224, K229, 293–295, and R370; these read GLGGVG and LGV.

It belongs to the zinc-containing alcohol dehydrogenase family. Class-I subfamily. Homodimer. Zn(2+) is required as a cofactor.

The protein localises to the cytoplasm. The enzyme catalyses a primary alcohol + NAD(+) = an aldehyde + NADH + H(+). It catalyses the reaction a secondary alcohol + NAD(+) = a ketone + NADH + H(+). This is Alcohol dehydrogenase 1 (ADH1) from Apteryx australis (Southern brown kiwi).